Reading from the N-terminus, the 94-residue chain is uncharacterized protein (94 aa).

It belongs to the phage portal family. HK97 subfamily.

This is an uncharacterized protein from Rickettsia conorii (strain ATCC VR-613 / Malish 7).